We begin with the raw amino-acid sequence, 388 residues long: tRNA (guanine-N(7)-)-methyltransferase (388 aa).

S-adenosyl-L-methionine is bound by residues glutamate 129, glutamate 154, and aspartate 181. Residues lysine 207 and aspartate 237 each coordinate substrate.

It belongs to the class I-like SAM-binding methyltransferase superfamily. TrmB family.

It catalyses the reaction guanosine(46) in tRNA + S-adenosyl-L-methionine = N(7)-methylguanosine(46) in tRNA + S-adenosyl-L-homocysteine. It functions in the pathway tRNA modification; N(7)-methylguanine-tRNA biosynthesis. Catalyzes the formation of N(7)-methylguanine at position 46 (m7G46) in tRNA. This Wolinella succinogenes (strain ATCC 29543 / DSM 1740 / CCUG 13145 / JCM 31913 / LMG 7466 / NCTC 11488 / FDC 602W) (Vibrio succinogenes) protein is tRNA (guanine-N(7)-)-methyltransferase.